A 299-amino-acid polypeptide reads, in one-letter code: Fibrinogen silencer-binding protein (299 aa).

Lys94 participates in a covalent cross-link: Glycyl lysine isopeptide (Lys-Gly) (interchain with G-Cter in SUMO2).

In terms of assembly, interacts with APBA1 (via PDZ 1 and 2 domains). Expressed in multiple tissues including brain.

Its subcellular location is the nucleus. Functionally, transcriptional repressor that down-regulates the expression of the fibrinogen gamma chain. Represses transcription of GSK3B gene promoter via its interaction with APBA1. The sequence is that of Fibrinogen silencer-binding protein (FSBP) from Homo sapiens (Human).